The chain runs to 191 residues: Endoribonuclease YbeY (191 aa).

Histidine 122, histidine 126, and histidine 132 together coordinate Zn(2+). Residues 164-191 (QPKPSGPKAFPDAAERAELDKEVPGGGI) are disordered. Over residues 176–191 (AAERAELDKEVPGGGI) the composition is skewed to basic and acidic residues.

The protein belongs to the endoribonuclease YbeY family. Zn(2+) serves as cofactor.

Its subcellular location is the cytoplasm. Its function is as follows. Single strand-specific metallo-endoribonuclease involved in late-stage 70S ribosome quality control and in maturation of the 3' terminus of the 16S rRNA. The polypeptide is Endoribonuclease YbeY (Corynebacterium aurimucosum (strain ATCC 700975 / DSM 44827 / CIP 107346 / CN-1) (Corynebacterium nigricans)).